The sequence spans 337 residues: Heat-inducible transcription repressor HrcA (337 aa).

This sequence belongs to the HrcA family.

In terms of biological role, negative regulator of class I heat shock genes (grpE-dnaK-dnaJ and groELS operons). Prevents heat-shock induction of these operons. The protein is Heat-inducible transcription repressor HrcA of Pseudarthrobacter chlorophenolicus (strain ATCC 700700 / DSM 12829 / CIP 107037 / JCM 12360 / KCTC 9906 / NCIMB 13794 / A6) (Arthrobacter chlorophenolicus).